The following is a 986-amino-acid chain: MALEDMEKKYRISDIARELQVSPQEVLLFVKQEGGRVASTSSMVGEEIHGLIFGHFSVEKKMVDETKKIRAEKEKRLSRLEEQSRKTYEKEQHLSETLSPPAPPLVVVHEPKKEVIVAAPIENIPEPPSKPLEIPVAETPASEEPDAPPAVTELIEQPVVIEQQPLAPVSDAPVPPVIIELPVPSEVPESQVLPESRVLPESQVLSESPLLPEPPVLSEPQEQQELPELPELPEIPALPEPAPKKEEPSVNEHLVSFDAPQMMGGLTVLGTLDMQAGRHKKNRKKNFQEQADALKDEFEPKPAEESRVEEKVVVAKKPPVKAAADVKPKPVVADSSSSAKKKGKKKKKPAVDDKVISANIQKTISGIDDRSSTGSRQKFRKMRRNEREREHEEDEAFREAQRLVVRVTEYASPHELAELMGITAKDIIQKCFALGKFVTINQRLDKESIELIALEFGFEAEFISEVEATAVIVTEDAEADMQTRPPVVTIMGHVDHGKTSLLDYIRNSKVVAGESGGITQHIGAYEVTVEGDRKITFLDTPGHEAFTAMRARGAQVTDIVILVVAADDSVMPQTIEAINHAKAAGVPIVVALNKIDKVEANPEKIKTQLSEAGVLVEEWGGVYQCQEISAKKGIGIAELMEKVLTEAEMRELRGNYSREVPASGIIVESELDKGKGVISTVLVQRGILKVGDPFVAGNTMGKVRALMDERGKRIPFANPSQPVRVLGFEDLPQSGDALTVMVTDREARDLAQKRQVIRREHDFRRSTRVKLDSIARQIKEGLMKELSVIIKADTDGSIQALADGLMKIQNEEVKVQIIHQGVGQITETDVLLAAASDAIIIGFRVRPNVNAKKLAEKEDLDVRFYSVIYHVLEDVEKALEGMLSPELHEESLGSLEIRQIFKVPKIGNVGGCYMLEGKMFRDSKVRLLRDGVQIYEGQLAALKRFKDDVKEVDAGYECGMSLKNYDDIKVGDIVEAYKIVEKKRKL.

Positions 75–94 (KRLSRLEEQSRKTYEKEQHL) are enriched in basic and acidic residues. Disordered regions lie at residues 75–105 (KRLS…APPL), 127–148 (PPSK…PDAP), 185–258 (SEVP…VSFD), and 277–394 (GRHK…HEED). Low complexity-rich tracts occupy residues 185-210 (SEVP…ESPL) and 218-235 (SEPQ…LPEI). The span at 292–313 (DALKDEFEPKPAEESRVEEKVV) shows a compositional bias: basic and acidic residues. Over residues 315-338 (AKKPPVKAAADVKPKPVVADSSSS) the composition is skewed to low complexity. A compositionally biased stretch (basic residues) spans 339–348 (AKKKGKKKKK). Positions 483 to 653 (TRPPVVTIMG…LTEAEMRELR (171 aa)) constitute a tr-type G domain. Residues 492-499 (GHVDHGKT) are G1. GTP is bound at residue 492–499 (GHVDHGKT). The tract at residues 517–521 (GITQH) is G2. The segment at 539 to 542 (DTPG) is G3. GTP is bound by residues 539–543 (DTPGH) and 593–596 (NKID). A G4 region spans residues 593-596 (NKID). Positions 629–631 (SAK) are G5.

Belongs to the TRAFAC class translation factor GTPase superfamily. Classic translation factor GTPase family. IF-2 subfamily.

The protein localises to the cytoplasm. Its function is as follows. One of the essential components for the initiation of protein synthesis. Protects formylmethionyl-tRNA from spontaneous hydrolysis and promotes its binding to the 30S ribosomal subunits. Also involved in the hydrolysis of GTP during the formation of the 70S ribosomal complex. The protein is Translation initiation factor IF-2 of Pelodictyon phaeoclathratiforme (strain DSM 5477 / BU-1).